The following is a 241-amino-acid chain: Agamous-like MADS-box protein AGL8 homolog (241 aa).

Positions 3–57 constitute an MADS-box domain; sequence RGRVQLKRIENKINRQVTFSKRRSGLLKKAHEISVLCDAEVALVIFSSKGKLFEY. The 91-residue stretch at 88–178 folds into the K-box domain; it reads SENWVLEHAK…LKKIKEREKN (91 aa).

The protein localises to the nucleus. Functionally, probable transcription factor. The chain is Agamous-like MADS-box protein AGL8 homolog (AGL8) from Sinapis alba (White mustard).